The sequence spans 203 residues: Protein GrpE (203 aa).

Over residues methionine 1–glutamine 10 the composition is skewed to basic and acidic residues. Residues methionine 1–glutamate 20 are disordered.

This sequence belongs to the GrpE family. In terms of assembly, homodimer.

The protein localises to the cytoplasm. Functionally, participates actively in the response to hyperosmotic and heat shock by preventing the aggregation of stress-denatured proteins, in association with DnaK and GrpE. It is the nucleotide exchange factor for DnaK and may function as a thermosensor. Unfolded proteins bind initially to DnaJ; upon interaction with the DnaJ-bound protein, DnaK hydrolyzes its bound ATP, resulting in the formation of a stable complex. GrpE releases ADP from DnaK; ATP binding to DnaK triggers the release of the substrate protein, thus completing the reaction cycle. Several rounds of ATP-dependent interactions between DnaJ, DnaK and GrpE are required for fully efficient folding. The sequence is that of Protein GrpE from Shewanella sp. (strain MR-4).